Here is a 430-residue protein sequence, read N- to C-terminus: MRTLNRVFAILSDLRLAIALLLLIAAASAVGTILPQQEAPELYLERFNADPWLGLINGDQMLAFQLDHLYSSVWFLALLAWLGLALMLCSWRRQWPALQAAMRWIDYTRPRQLSKLALAETLSCASSDGALSSLAIELKSRGWQVKQHQDRLAARRGVVGRVGPLLVHTGLVLLLIGAAWGALAGQRLERFLAPGRSLDLLDPAGANRLSLTLENFSITRDPAGRAEQFQSTLTLSPPGQEDERRTISVNHPLRYQGMTVYQADWSLAAVTVQIGKSPMLQLPLSTFPELGDQVWGLVLPTRPDGSEPVFLSTSSEQGPVQVFGSDGALITNLRPGGEGTEVRGLPLKVIDILPASGLLLKRDPGVPLVYAGFAITLLGGALSMVATRQIWVISDAVHQRLHIGGLCNRNLLGFAAELPELINRVDVSHG.

Helical transmembrane passes span 14-34 (LRLAIALLLLIAAASAVGTIL), 72-92 (SVWFLALLAWLGLALMLCSWR), and 162-182 (VGPLLVHTGLVLLLIGAAWGA).

Belongs to the Ccs1/CcsB family. May interact with CcsA.

The protein resides in the cellular thylakoid membrane. In terms of biological role, required during biogenesis of c-type cytochromes (cytochrome c6 and cytochrome f) at the step of heme attachment. The polypeptide is Cytochrome c biogenesis protein CcsB (Synechococcus sp. (strain WH7803)).